The chain runs to 77 residues: Omega-conotoxin-like SO-5 (77 aa).

The first 22 residues, 1 to 22, serve as a signal peptide directing secretion; that stretch reads MKLTCVMIVAVLLLTACQLITA. A propeptide spanning residues 23–42 is cleaved from the precursor; the sequence is DDSRGTQKHRSLRSTTKVSK. Cystine bridges form between Cys-46-Cys-61, Cys-53-Cys-64, and Cys-60-Cys-71.

Belongs to the conotoxin O1 superfamily. In terms of tissue distribution, expressed by the venom duct.

Its subcellular location is the secreted. Omega-conotoxins act at presynaptic membranes, they bind and block voltage-gated calcium channels (Cav). This Conus striatus (Striated cone) protein is Omega-conotoxin-like SO-5 (SO5).